The chain runs to 267 residues: Tryptophan synthase alpha chain (267 aa).

Active-site proton acceptor residues include Glu-47 and Asp-58.

Belongs to the TrpA family. Tetramer of two alpha and two beta chains.

It catalyses the reaction (1S,2R)-1-C-(indol-3-yl)glycerol 3-phosphate + L-serine = D-glyceraldehyde 3-phosphate + L-tryptophan + H2O. The protein operates within amino-acid biosynthesis; L-tryptophan biosynthesis; L-tryptophan from chorismate: step 5/5. Functionally, the alpha subunit is responsible for the aldol cleavage of indoleglycerol phosphate to indole and glyceraldehyde 3-phosphate. This chain is Tryptophan synthase alpha chain, found in Chlorobaculum tepidum (strain ATCC 49652 / DSM 12025 / NBRC 103806 / TLS) (Chlorobium tepidum).